The chain runs to 69 residues: Putative membrane protein insertion efficiency factor (69 aa).

This sequence belongs to the UPF0161 family.

It localises to the cell membrane. Its function is as follows. Could be involved in insertion of integral membrane proteins into the membrane. The polypeptide is Putative membrane protein insertion efficiency factor (Alkaliphilus oremlandii (strain OhILAs) (Clostridium oremlandii (strain OhILAs))).